Here is a 427-residue protein sequence, read N- to C-terminus: Adenylosuccinate synthetase (427 aa).

Residues 12–18 (GDEGKGK) and 40–42 (GHT) contribute to the GTP site. Asp13 functions as the Proton acceptor in the catalytic mechanism. Mg(2+)-binding residues include Asp13 and Gly40. Residues 13–16 (DEGK), 38–41 (NAGH), Thr128, Arg142, Gln223, Thr238, and Arg302 contribute to the IMP site. Catalysis depends on His41, which acts as the Proton donor. 298–304 (TTTGRPR) is a binding site for substrate. GTP is bound by residues Arg304, 330–332 (KLD), and 412–414 (SVG).

This sequence belongs to the adenylosuccinate synthetase family. Homodimer. It depends on Mg(2+) as a cofactor.

It is found in the cytoplasm. The enzyme catalyses IMP + L-aspartate + GTP = N(6)-(1,2-dicarboxyethyl)-AMP + GDP + phosphate + 2 H(+). It participates in purine metabolism; AMP biosynthesis via de novo pathway; AMP from IMP: step 1/2. In terms of biological role, plays an important role in the de novo pathway of purine nucleotide biosynthesis. Catalyzes the first committed step in the biosynthesis of AMP from IMP. The sequence is that of Adenylosuccinate synthetase from Carboxydothermus hydrogenoformans (strain ATCC BAA-161 / DSM 6008 / Z-2901).